Here is a 112-residue protein sequence, read N- to C-terminus: DNA-binding protein TGAM_1196 (112 aa).

Belongs to the PDCD5 family.

The chain is DNA-binding protein TGAM_1196 from Thermococcus gammatolerans (strain DSM 15229 / JCM 11827 / EJ3).